Reading from the N-terminus, the 916-residue chain is DNA ligase 1 (916 aa).

Residues 1-10 (MQRSIMSFFQ) are compositionally biased toward polar residues. Residues 1–197 (MQRSIMSFFQ…SPESVTLTKT (197 aa)) form a disordered region. Basic and acidic residues predominate over residues 13-43 (KEGKAKKPEKETPSSIREKEPPPKVALKERN). Residues Ser-49, Ser-51, and Ser-65 each carry the phosphoserine modification. Residue Thr-77 is modified to Phosphothreonine. The segment covering 99–111 (PENSPVFNCSSPM) has biased composition (polar residues). The span at 119–129 (PKRRTARKQLP) shows a compositional bias: basic residues. An N6-acetyllysine modification is found at Lys-144. Residues 153-177 (KEEETPKESLAEAEDIKQKEEKEGD) show a composition bias toward basic and acidic residues. The span at 185-197 (PTKSPESVTLTKT) shows a compositional bias: polar residues. Thr-193 carries the phosphothreonine modification. Residue Lys-225 is modified to N6-acetyllysine. Phosphoserine occurs at positions 228 and 229. Thr-232 carries the post-translational modification Phosphothreonine. Residues 236 to 266 (PAVKTEVKQEESGTLRKEETKGTLDPANYNP) are disordered. Over residues 238–257 (VKTEVKQEESGTLRKEETKG) the composition is skewed to basic and acidic residues. The segment at 447–456 (RLRLGLAEQS) is interaction with target DNA. Residue Glu-564 participates in ATP binding. The active-site N6-AMP-lysine intermediate is Lys-566. ATP contacts are provided by Arg-571 and Glu-619. Glu-619 lines the Mg(2+) pocket. The segment at 640-642 (KRK) is interaction with target DNA. Glu-718 contributes to the Mg(2+) binding site. Lys-723 and Lys-742 together coordinate ATP. Position 796 is a phosphothreonine (Thr-796). Phosphoserine is present on residues Ser-799, Ser-906, Ser-907, and Ser-911. Positions 879–916 (DKQPEQATTSNQVASLYRKQSQIQNQQSSDLDSDVEDY) are disordered. The span at 883-908 (EQATTSNQVASLYRKQSQIQNQQSSD) shows a compositional bias: polar residues.

The protein belongs to the ATP-dependent DNA ligase family. As to quaternary structure, interacts with PCNA. Interacts with POLB. Requires Mg(2+) as cofactor.

It localises to the nucleus. It carries out the reaction ATP + (deoxyribonucleotide)n-3'-hydroxyl + 5'-phospho-(deoxyribonucleotide)m = (deoxyribonucleotide)n+m + AMP + diphosphate.. In terms of biological role, DNA ligase that seals nicks in double-stranded during DNA repair. Also involved in DNA replication and DNA recombination. In Mus musculus (Mouse), this protein is DNA ligase 1 (Lig1).